A 202-amino-acid chain; its full sequence is uncharacterized protein (202 aa).

The signal sequence occupies residues methionine 1–alanine 18.

The protein to E.coli YebB.

This is an uncharacterized protein from Escherichia coli (strain K12).